The chain runs to 273 residues: Ribosomal RNA small subunit methyltransferase A (273 aa).

6 residues coordinate S-adenosyl-L-methionine: histidine 10, leucine 12, glycine 37, glutamate 58, aspartate 83, and asparagine 108.

The protein belongs to the class I-like SAM-binding methyltransferase superfamily. rRNA adenine N(6)-methyltransferase family. RsmA subfamily.

The protein resides in the cytoplasm. The catalysed reaction is adenosine(1518)/adenosine(1519) in 16S rRNA + 4 S-adenosyl-L-methionine = N(6)-dimethyladenosine(1518)/N(6)-dimethyladenosine(1519) in 16S rRNA + 4 S-adenosyl-L-homocysteine + 4 H(+). In terms of biological role, specifically dimethylates two adjacent adenosines (A1518 and A1519) in the loop of a conserved hairpin near the 3'-end of 16S rRNA in the 30S particle. May play a critical role in biogenesis of 30S subunits. The chain is Ribosomal RNA small subunit methyltransferase A from Picosynechococcus sp. (strain ATCC 27264 / PCC 7002 / PR-6) (Agmenellum quadruplicatum).